The chain runs to 211 residues: Methylthioribulose-1-phosphate dehydratase (211 aa).

Zn(2+) contacts are provided by His-105 and His-107.

Belongs to the aldolase class II family. MtnB subfamily. Zn(2+) serves as cofactor.

The enzyme catalyses 5-(methylsulfanyl)-D-ribulose 1-phosphate = 5-methylsulfanyl-2,3-dioxopentyl phosphate + H2O. It functions in the pathway amino-acid biosynthesis; L-methionine biosynthesis via salvage pathway; L-methionine from S-methyl-5-thio-alpha-D-ribose 1-phosphate: step 2/6. Catalyzes the dehydration of methylthioribulose-1-phosphate (MTRu-1-P) into 2,3-diketo-5-methylthiopentyl-1-phosphate (DK-MTP-1-P). This is Methylthioribulose-1-phosphate dehydratase from Acidiphilium cryptum (strain JF-5).